Consider the following 112-residue polypeptide: Ribosomal processing cysteine protease Prp (112 aa).

Residue histidine 22 is the Proton donor of the active site. Cysteine 34 functions as the Nucleophile in the catalytic mechanism.

It belongs to the Prp family. Homodimer.

In terms of biological role, an essential cysteine protease that cleaves the N-terminus from ribosomal protein bL27. The chain is Ribosomal processing cysteine protease Prp from Bacillus subtilis (strain 168).